We begin with the raw amino-acid sequence, 175 residues long: Nucleoside triphosphate/diphosphate phosphatase (175 aa).

The active-site Proton donor is the R23. Residues N87, D103, D105, D107, D120, and E123 each coordinate Mg(2+).

It belongs to the Ntdp family. Requires Mg(2+) as cofactor.

The catalysed reaction is a ribonucleoside 5'-triphosphate + H2O = a ribonucleoside 5'-diphosphate + phosphate + H(+). It catalyses the reaction a ribonucleoside 5'-diphosphate + H2O = a ribonucleoside 5'-phosphate + phosphate + H(+). Has nucleoside phosphatase activity towards nucleoside triphosphates and nucleoside diphosphates. The sequence is that of Nucleoside triphosphate/diphosphate phosphatase from Halalkalibacterium halodurans (strain ATCC BAA-125 / DSM 18197 / FERM 7344 / JCM 9153 / C-125) (Bacillus halodurans).